A 160-amino-acid chain; its full sequence is Deoxyuridine 5'-triphosphate nucleotidohydrolase (160 aa).

Substrate contacts are provided by residues 72-74 (RSG), Asn85, and 89-91 (TID).

This sequence belongs to the dUTPase family. Mg(2+) is required as a cofactor.

It catalyses the reaction dUTP + H2O = dUMP + diphosphate + H(+). It participates in pyrimidine metabolism; dUMP biosynthesis; dUMP from dCTP (dUTP route): step 2/2. This enzyme is involved in nucleotide metabolism: it produces dUMP, the immediate precursor of thymidine nucleotides and it decreases the intracellular concentration of dUTP so that uracil cannot be incorporated into DNA. This Methylocella silvestris (strain DSM 15510 / CIP 108128 / LMG 27833 / NCIMB 13906 / BL2) protein is Deoxyuridine 5'-triphosphate nucleotidohydrolase.